The following is a 478-amino-acid chain: MSSYSELSNLPIREIPGDYGFPIISAIKDRYDYFYNQGEDAWFHNKAEKYKSTVVKINMAPGPFTSNDYKLVAFLDANSFVCMFDNSLIDKTDTLGGTFKPGKEYYSGYRPVAFIDTKDPNHAALKGYILSAFAKRHNLFIPLFRNSLSDHLFNNLEKQVTEQGKSDFNALLPTMTFNFIFRLLCDQTNPSDTVLGAQGPEHLRKWLFPQLIPSLSAKKLPNIIEDTLFHNFLIPFGFIKSDYNKLVDAFSKSAVSILDEAEKLGIKREEAVQNILFLVGINMFAGLNAFSPHLFRFVGEAGASLHTQLAKEIRTVIKEEGGAITLSAINKMSLVKSVVYETLRLRPPVPLQYGKAKKDFMVQSHDASYKINKGQFVVGYQPMASRDPKIFANPDEFVPDRFMNDGEKMLKHVLWSNGRETENPAPDNKQCPGKDLVHLLGRLILVEFFMRYDTFTVEITPLFRAPNVAFKTLTKASK.

Cys431 is a binding site for heme.

This sequence belongs to the cytochrome P450 family. 9-divinyl ether synthase subfamily. As to expression, expressed in roots.

It carries out the reaction (9S)-hydroperoxy-(10E,12Z)-octadecadienoate = colneleate + H2O. The enzyme catalyses (9S)-hydroperoxy-(10E,12Z,15Z)-octadecatrienoate = colnelenate + H2O. Its function is as follows. Involved in the biosynthesis of the anti-fungal and antibacterial toxins colneleate and colnelenate. Can use (9S)-hydroperoxy-(10E,12Z)-octadecadienoate (9-HPOD) and (9S)-hydroperoxy-(10E,12Z,15Z)-octadecatrienoate (9-HPOT) as substrates but has no activity with the corresponding 13-hydroperoxides (13-HPOD and 13-HPOT). This chain is Divinyl ether synthase CYP74D2, found in Solanum tuberosum (Potato).